The sequence spans 438 residues: GTPase Der (438 aa).

2 consecutive EngA-type G domains span residues 4 to 169 and 178 to 353; these read PVVA…PEKG and IDVA…DQNS. GTP-binding positions include 10-17, 57-61, 120-123, 184-191, 231-235, and 296-299; these read GRPNVGKS, DTGGI, NKVD, GKPNVGKS, DTAGL, and NKWD. Residues 354-438 enclose the KH-like domain; that stretch reads RRVKTGLLNE…PIRLKFKQKT (85 aa).

The protein belongs to the TRAFAC class TrmE-Era-EngA-EngB-Septin-like GTPase superfamily. EngA (Der) GTPase family. Associates with the 50S ribosomal subunit.

Its function is as follows. GTPase that plays an essential role in the late steps of ribosome biogenesis. This chain is GTPase Der, found in Halothermothrix orenii (strain H 168 / OCM 544 / DSM 9562).